Reading from the N-terminus, the 287-residue chain is Bifunctional protein FolD (287 aa).

NADP(+)-binding positions include 164–166 (GSS), S189, and I230.

This sequence belongs to the tetrahydrofolate dehydrogenase/cyclohydrolase family. In terms of assembly, homodimer.

The catalysed reaction is (6R)-5,10-methylene-5,6,7,8-tetrahydrofolate + NADP(+) = (6R)-5,10-methenyltetrahydrofolate + NADPH. It carries out the reaction (6R)-5,10-methenyltetrahydrofolate + H2O = (6R)-10-formyltetrahydrofolate + H(+). It functions in the pathway one-carbon metabolism; tetrahydrofolate interconversion. Catalyzes the oxidation of 5,10-methylenetetrahydrofolate to 5,10-methenyltetrahydrofolate and then the hydrolysis of 5,10-methenyltetrahydrofolate to 10-formyltetrahydrofolate. This is Bifunctional protein FolD from Aliarcobacter butzleri (strain RM4018) (Arcobacter butzleri).